A 1040-amino-acid chain; its full sequence is Multidrug resistance protein MdtB (1040 aa).

Transmembrane regions (helical) follow at residues Leu25 to Ala45, Leu347 to Ala367, Ile369 to Leu389, Leu396 to Ile416, Ile440 to Phe460, Phe472 to Pro492, Trp537 to Ile557, Leu863 to Val883, Phe888 to Ala908, Ile910 to Ile930, Ile968 to Val988, and Ile998 to Ile1018.

It belongs to the resistance-nodulation-cell division (RND) (TC 2.A.6) family. MdtB subfamily. As to quaternary structure, part of a tripartite efflux system composed of MdtA, MdtB and MdtC. MdtB forms a heteromultimer with MdtC.

The protein resides in the cell inner membrane. In Salmonella paratyphi A (strain ATCC 9150 / SARB42), this protein is Multidrug resistance protein MdtB.